A 598-amino-acid polypeptide reads, in one-letter code: Elongation factor 4 (598 aa).

One can recognise a tr-type G domain in the interval 2–184; sequence KNIRNFSIIA…EIVAKIPAPE (183 aa). Residues 14–19 and 131–134 each bind GTP; these read DHGKST and NKID.

It belongs to the TRAFAC class translation factor GTPase superfamily. Classic translation factor GTPase family. LepA subfamily.

It is found in the cell inner membrane. It carries out the reaction GTP + H2O = GDP + phosphate + H(+). Required for accurate and efficient protein synthesis under certain stress conditions. May act as a fidelity factor of the translation reaction, by catalyzing a one-codon backward translocation of tRNAs on improperly translocated ribosomes. Back-translocation proceeds from a post-translocation (POST) complex to a pre-translocation (PRE) complex, thus giving elongation factor G a second chance to translocate the tRNAs correctly. Binds to ribosomes in a GTP-dependent manner. This is Elongation factor 4 from Haemophilus influenzae (strain ATCC 51907 / DSM 11121 / KW20 / Rd).